Here is a 326-residue protein sequence, read N- to C-terminus: Malate dehydrogenase (326 aa).

11 to 17 (GAAGQIG) is a binding site for NAD(+). Positions 92 and 98 each coordinate substrate. Residues N105, Q112, and 129 to 131 (VGN) contribute to the NAD(+) site. Substrate-binding residues include N131 and R162. H187 (proton acceptor) is an active-site residue.

The protein belongs to the LDH/MDH superfamily. MDH type 2 family.

The enzyme catalyses (S)-malate + NAD(+) = oxaloacetate + NADH + H(+). Its function is as follows. Catalyzes the reversible oxidation of malate to oxaloacetate. The chain is Malate dehydrogenase from Leptospira borgpetersenii serovar Hardjo-bovis (strain JB197).